Consider the following 489-residue polypeptide: L-asparagine permease 1 (489 aa).

12 helical membrane passes run glutamine 25–glycine 45, lysine 49–leucine 69, alanine 100–isoleucine 120, isoleucine 137–phenylalanine 157, phenylalanine 162–phenylalanine 182, tryptophan 210–valine 230, isoleucine 255–tyrosine 275, isoleucine 289–serine 309, tyrosine 344–lysine 364, phenylalanine 369–leucine 389, serine 413–serine 433, and threonine 439–valine 459.

Belongs to the amino acid-polyamine-organocation (APC) superfamily. Amino acid transporter (AAT) (TC 2.A.3.1) family.

The protein resides in the cell membrane. This chain is L-asparagine permease 1 (ansP1), found in Mycobacterium bovis (strain ATCC BAA-935 / AF2122/97).